We begin with the raw amino-acid sequence, 164 residues long: ATP synthase subunit b (164 aa).

The helical transmembrane segment at F12–G32 threads the bilayer.

This sequence belongs to the ATPase B chain family. As to quaternary structure, F-type ATPases have 2 components, F(1) - the catalytic core - and F(0) - the membrane proton channel. F(1) has five subunits: alpha(3), beta(3), gamma(1), delta(1), epsilon(1). F(0) has three main subunits: a(1), b(2) and c(10-14). The alpha and beta chains form an alternating ring which encloses part of the gamma chain. F(1) is attached to F(0) by a central stalk formed by the gamma and epsilon chains, while a peripheral stalk is formed by the delta and b chains.

It is found in the cell membrane. Functionally, f(1)F(0) ATP synthase produces ATP from ADP in the presence of a proton or sodium gradient. F-type ATPases consist of two structural domains, F(1) containing the extramembraneous catalytic core and F(0) containing the membrane proton channel, linked together by a central stalk and a peripheral stalk. During catalysis, ATP synthesis in the catalytic domain of F(1) is coupled via a rotary mechanism of the central stalk subunits to proton translocation. Component of the F(0) channel, it forms part of the peripheral stalk, linking F(1) to F(0). The chain is ATP synthase subunit b from Streptococcus equi subsp. zooepidemicus (strain MGCS10565).